The following is a 61-amino-acid chain: Small ribosomal subunit protein uS14 (61 aa).

The Zn(2+) site is built by Cys-24, Cys-27, Cys-40, and Cys-43.

Belongs to the universal ribosomal protein uS14 family. Zinc-binding uS14 subfamily. As to quaternary structure, part of the 30S ribosomal subunit. Contacts proteins S3 and S10. Zn(2+) is required as a cofactor.

In terms of biological role, binds 16S rRNA, required for the assembly of 30S particles and may also be responsible for determining the conformation of the 16S rRNA at the A site. This chain is Small ribosomal subunit protein uS14, found in Nitratiruptor sp. (strain SB155-2).